A 686-amino-acid chain; its full sequence is Methionine--tRNA ligase (686 aa).

Positions 15-25 (PYANGSIHLGH) match the 'HIGH' region motif. Zn(2+)-binding residues include C146, C149, C159, and C162. A 'KMSKS' region motif is present at residues 332 to 336 (KMSKS). Residue K335 coordinates ATP. Positions 585 to 686 (AFEAVDMRIA…EGAQPGMRVM (102 aa)) constitute a tRNA-binding domain.

It belongs to the class-I aminoacyl-tRNA synthetase family. MetG type 1 subfamily. In terms of assembly, homodimer. Requires Zn(2+) as cofactor.

Its subcellular location is the cytoplasm. It carries out the reaction tRNA(Met) + L-methionine + ATP = L-methionyl-tRNA(Met) + AMP + diphosphate. Functionally, is required not only for elongation of protein synthesis but also for the initiation of all mRNA translation through initiator tRNA(fMet) aminoacylation. The sequence is that of Methionine--tRNA ligase from Aliivibrio fischeri (strain MJ11) (Vibrio fischeri).